An 84-amino-acid polypeptide reads, in one-letter code: Small ribosomal subunit protein bS20 (84 aa).

The segment at Met-1 to Met-28 is disordered.

Belongs to the bacterial ribosomal protein bS20 family.

Binds directly to 16S ribosomal RNA. This is Small ribosomal subunit protein bS20 from Listeria monocytogenes serotype 4b (strain CLIP80459).